The following is a 514-amino-acid chain: Beta-secretase 2 (514 aa).

The first 19 residues, 1–19, serve as a signal peptide directing secretion; the sequence is MGALLRALLLLVLAQWLLS. Residues 20 to 62 constitute a propeptide that is removed on maturation; it reads AVPALAPAPFTLPLQVAGATNHRASAVPGLGTPELPRADGLAL. Topologically, residues 20–469 are extracellular; the sequence is AVPALAPAPF…NEPILWIVSY (450 aa). In terms of domain architecture, Peptidase A1 spans 88–425; the sequence is YYLEMLIGTP…DRAQRRVGFA (338 aa). D106 is an active-site residue. Residue N166 is glycosylated (N-linked (GlcNAc...) asparagine). 3 disulfides stabilise this stretch: C229-C429, C288-C453, and C340-C389. Residue D299 is part of the active site. An N-linked (GlcNAc...) asparagine glycan is attached at N362. Residues 470–490 form a helical membrane-spanning segment; it reads ALMSVCGAILLVLILLLLLPL. The Cytoplasmic portion of the chain corresponds to 491–514; it reads HCRHAPRDPEVVNDESSLVRHRWK.

Belongs to the peptidase A1 family. As to quaternary structure, monomer. Interacts with RTN3 and RTN4. In terms of processing, undergoes autoproteolytic cleavage. Glycosylated. As to expression, high expression in pancreatic islets. Expressed at much lower levels in the pituitary, colon, and ovaries and is nearly absent from all the other tissues.

The protein localises to the cell membrane. It is found in the golgi apparatus. The protein resides in the endoplasmic reticulum. It localises to the endosome. Its subcellular location is the melanosome. It carries out the reaction Broad endopeptidase specificity. Cleaves Glu-Val-Asn-Leu-|-Asp-Ala-Glu-Phe in the Swedish variant of Alzheimer's amyloid precursor protein.. Its function is as follows. Responsible for the proteolytic processing of the amyloid precursor protein (APP). Cleaves APP, between residues 690 and 691, leading to the generation and extracellular release of beta-cleaved soluble APP, and a corresponding cell-associated C-terminal fragment which is later released by gamma-secretase. It has also been shown that it can cleave APP between residues 671 and 672. Involved in the proteolytic shedding of PMEL at early stages of melanosome biogenesis. Cleaves PMEL within the M-beta fragment to release the amyloidogenic PMEL luminal fragment containing M-alpha and a small portion of M-beta N-terminus. This is a prerequisite step for subsequent processing and assembly of PMEL fibrils into amyloid sheets. Responsible also for the proteolytic processing of CLTRN in pancreatic beta cells. This is Beta-secretase 2 (Bace2) from Mus musculus (Mouse).